We begin with the raw amino-acid sequence, 79 residues long: Submaxillary gland androgen-regulated protein 3B (79 aa).

An N-terminal signal peptide occupies residues 1-22; sequence MKSLTWILGLWALAACFTPGES. A disordered region spans residues 19–79; it reads PGESQRGPRG…GIFPPPPPQP (61 aa). Q23 carries the pyrrolidone carboxylic acid modification. Positions 28–79 are enriched in pro residues; the sequence is GPYPPGPLAPPQPFGPGFVPPPPPPPYGPGRIPPPPPAPYGPGIFPPPPPQP.

Belongs to the PROL1/PROL3 family. In terms of processing, P-A and D1A are probably degradation products of P-B. As to expression, secreted into saliva by submaxillary gland. Not expressed in heart, brain, lung, liver, skeletal muscle, Kidney, pancreas or placenta.

It is found in the secreted. This Homo sapiens (Human) protein is Submaxillary gland androgen-regulated protein 3B (SMR3B).